The primary structure comprises 128 residues: MKKTGIFNSEISRVIAKLGHKDKIAIVDLGFPIPSHVERIDIVLDFGRPTFEEVLKVILKELEVEQVILAHESSKKFEQIIKENIPRVEFLKISHEELKKLTNDVVAVIRTGDVVPYSNAILVSGVIF.

The active-site Proton donor is the His20. Substrate is bound by residues Asp28, His95, and 117 to 119; that span reads YSN.

The protein belongs to the RbsD / FucU family. RbsD subfamily. As to quaternary structure, homodecamer.

The protein resides in the cytoplasm. The enzyme catalyses beta-D-ribopyranose = beta-D-ribofuranose. The protein operates within carbohydrate metabolism; D-ribose degradation; D-ribose 5-phosphate from beta-D-ribopyranose: step 1/2. Functionally, catalyzes the interconversion of beta-pyran and beta-furan forms of D-ribose. This chain is D-ribose pyranase, found in Thermosipho africanus (strain TCF52B).